A 261-amino-acid chain; its full sequence is Kallikrein 1-related peptidase b21 (261 aa).

Residues 1–17 (MRFLILFLALSLGEIDA) form the signal peptide. The propeptide at 18–24 (APPVQSR) is activation peptide. Residues 25–258 (IVGGFNCEKN…FTSWIKDTMA (234 aa)) form the Peptidase S1 domain. 5 cysteine pairs are disulfide-bonded: Cys31-Cys173, Cys50-Cys66, Cys152-Cys219, Cys184-Cys198, and Cys209-Cys234. His65 functions as the Charge relay system in the catalytic mechanism. N-linked (GlcNAc...) asparagine glycosylation occurs at Asn102. Asp120 acts as the Charge relay system in catalysis. Ser213 acts as the Charge relay system in catalysis.

It belongs to the peptidase S1 family. Kallikrein subfamily. As to expression, expressed in testis and submaxillary gland. In the testis, expression localized specifically to Leydig cells in the interstitial tissues.

It catalyses the reaction Preferential cleavage of Arg-|-Xaa bonds in small molecule substrates. Highly selective action to release kallidin (lysyl-bradykinin) from kininogen involves hydrolysis of Met-|-Xaa or Leu-|-Xaa.. With respect to regulation, inhibited by protease inhibitors diisopropylfluorophosphate, leupeptin, antipain, benzamidine, phenylmethylsulfonyl fluoride and soybean trypsin inhibitor. In terms of biological role, glandular kallikreins cleave Met-Lys and Arg-Ser bonds in kininogen to release Lys-bradykinin. Displays trypsin-like substrate specificity and shows activity towards casein, gelatin, fibronectin and IGFBP3. This is Kallikrein 1-related peptidase b21 (Klk1b21) from Mus musculus (Mouse).